A 153-amino-acid polypeptide reads, in one-letter code: Xanthine-guanine phosphoribosyltransferase (153 aa).

5-phospho-alpha-D-ribose 1-diphosphate contacts are provided by residues 37–38 (RG), R69, and 88–96 (DDLVDTGGT). R69 lines the GMP pocket. A Mg(2+)-binding site is contributed by D89. The guanine site is built by D92 and I135. Residues D92 and I135 each coordinate xanthine. GMP contacts are provided by residues 92–96 (DTGGT) and 134–135 (WI).

This sequence belongs to the purine/pyrimidine phosphoribosyltransferase family. XGPT subfamily. As to quaternary structure, homotetramer. It depends on Mg(2+) as a cofactor.

Its subcellular location is the cell inner membrane. It catalyses the reaction GMP + diphosphate = guanine + 5-phospho-alpha-D-ribose 1-diphosphate. The catalysed reaction is XMP + diphosphate = xanthine + 5-phospho-alpha-D-ribose 1-diphosphate. It carries out the reaction IMP + diphosphate = hypoxanthine + 5-phospho-alpha-D-ribose 1-diphosphate. The protein operates within purine metabolism; GMP biosynthesis via salvage pathway; GMP from guanine: step 1/1. It functions in the pathway purine metabolism; XMP biosynthesis via salvage pathway; XMP from xanthine: step 1/1. Its function is as follows. Purine salvage pathway enzyme that catalyzes the transfer of the ribosyl-5-phosphate group from 5-phospho-alpha-D-ribose 1-diphosphate (PRPP) to the N9 position of the 6-oxopurines guanine and xanthine to form the corresponding ribonucleotides GMP (guanosine 5'-monophosphate) and XMP (xanthosine 5'-monophosphate), with the release of PPi. To a lesser extent, also acts on hypoxanthine. This chain is Xanthine-guanine phosphoribosyltransferase, found in Photorhabdus laumondii subsp. laumondii (strain DSM 15139 / CIP 105565 / TT01) (Photorhabdus luminescens subsp. laumondii).